A 497-amino-acid polypeptide reads, in one-letter code: Protein FAM114A2 (497 aa).

Residues 1–54 are disordered; sequence MSDKDPPESPVVTGVASTLKDENCEPVEKPEDKSQPVVSTRKRPETKPSSDLEA. The segment covering 19 to 34 has biased composition (basic and acidic residues); the sequence is LKDENCEPVEKPEDKS. A phosphoserine mark is found at serine 84 and serine 205. The disordered stretch occupies residues 344–364; that stretch reads VAEKEEGEKESEAGNTEEAQK.

The protein belongs to the FAM114 family.

The polypeptide is Protein FAM114A2 (Fam114a2) (Mus musculus (Mouse)).